We begin with the raw amino-acid sequence, 266 residues long: Hydroxyethylthiazole kinase (266 aa).

Substrate is bound at residue Met45. Residues Arg120 and Thr165 each coordinate ATP. Ala192 is a binding site for substrate.

The protein belongs to the Thz kinase family. It depends on Mg(2+) as a cofactor.

The catalysed reaction is 5-(2-hydroxyethyl)-4-methylthiazole + ATP = 4-methyl-5-(2-phosphooxyethyl)-thiazole + ADP + H(+). Its pathway is cofactor biosynthesis; thiamine diphosphate biosynthesis; 4-methyl-5-(2-phosphoethyl)-thiazole from 5-(2-hydroxyethyl)-4-methylthiazole: step 1/1. Catalyzes the phosphorylation of the hydroxyl group of 4-methyl-5-beta-hydroxyethylthiazole (THZ). This Psychrobacter sp. (strain PRwf-1) protein is Hydroxyethylthiazole kinase.